Consider the following 264-residue polypeptide: Glutamate racemase (264 aa).

Substrate is bound by residues 10-11 and 42-43; these read DS and YG. The active-site Proton donor/acceptor is the cysteine 73. Residue 74–75 coordinates substrate; that stretch reads NT. The active-site Proton donor/acceptor is the cysteine 183. 184-185 is a binding site for substrate; sequence TH.

Belongs to the aspartate/glutamate racemases family.

The catalysed reaction is L-glutamate = D-glutamate. The protein operates within cell wall biogenesis; peptidoglycan biosynthesis. In terms of biological role, provides the (R)-glutamate required for cell wall biosynthesis. This Streptococcus suis (strain 98HAH33) protein is Glutamate racemase.